Reading from the N-terminus, the 359-residue chain is Phospho-N-acetylmuramoyl-pentapeptide-transferase (359 aa).

10 helical membrane passes run 21 to 41 (YITF…FLLG), 73 to 93 (TMGG…WADL), 98 to 118 (IWVT…DDYL), 143 to 163 (GICL…VPFF), 166 to 186 (VAPD…VGTS), 202 to 222 (PLVI…NAII), 237 to 257 (VTVF…FNAY), 261 to 281 (IFMG…VAII), 286 to 306 (ILLT…IFQV), and 336 to 356 (KIIV…VSTL).

It belongs to the glycosyltransferase 4 family. MraY subfamily. Requires Mg(2+) as cofactor.

It is found in the cell inner membrane. The enzyme catalyses UDP-N-acetyl-alpha-D-muramoyl-L-alanyl-gamma-D-glutamyl-meso-2,6-diaminopimeloyl-D-alanyl-D-alanine + di-trans,octa-cis-undecaprenyl phosphate = di-trans,octa-cis-undecaprenyl diphospho-N-acetyl-alpha-D-muramoyl-L-alanyl-D-glutamyl-meso-2,6-diaminopimeloyl-D-alanyl-D-alanine + UMP. It functions in the pathway cell wall biogenesis; peptidoglycan biosynthesis. In terms of biological role, catalyzes the initial step of the lipid cycle reactions in the biosynthesis of the cell wall peptidoglycan: transfers peptidoglycan precursor phospho-MurNAc-pentapeptide from UDP-MurNAc-pentapeptide onto the lipid carrier undecaprenyl phosphate, yielding undecaprenyl-pyrophosphoryl-MurNAc-pentapeptide, known as lipid I. The sequence is that of Phospho-N-acetylmuramoyl-pentapeptide-transferase from Desulfosudis oleivorans (strain DSM 6200 / JCM 39069 / Hxd3) (Desulfococcus oleovorans).